Here is an 888-residue protein sequence, read N- to C-terminus: Semaphorin-6B (888 aa).

A signal peptide spans 1–25 (MQTPRASPPRPALLLLLLLLGGAHG). At 26–603 (LFPEEPPPLS…VSVNLLVTSS (578 aa)) the chain is on the extracellular side. Positions 31 to 523 (PPPLSVAPRD…FPRCVVRVPV (493 aa)) constitute a Sema domain. Asparagine 74 carries an N-linked (GlcNAc...) asparagine glycan. Disulfide bonds link cysteine 116–cysteine 126 and cysteine 144–cysteine 153. N-linked (GlcNAc...) asparagine glycans are attached at residues asparagine 155, asparagine 167, and asparagine 291. Cystine bridges form between cysteine 267–cysteine 378 and cysteine 292–cysteine 337. Asparagine 386, asparagine 441, and asparagine 462 each carry an N-linked (GlcNAc...) asparagine glycan. Intrachain disulfides connect cysteine 486–cysteine 517, cysteine 526–cysteine 544, cysteine 532–cysteine 578, and cysteine 536–cysteine 552. The chain crosses the membrane as a helical span at residues 604–624 (VAAFVVGAVVSGFSVGWFVGL). Residues 625-888 (RERRELARRK…GADRTAPPVP (264 aa)) are Cytoplasmic-facing. Disordered regions lie at residues 651 to 679 (VSRL…PPEA), 695 to 742 (LQGG…HPLL), and 757 to 888 (RAPE…PPVP). Residues 661–674 (GPGGRGGGGGGGAG) are compositionally biased toward gly residues. An Omega-N-methylarginine modification is found at arginine 665. Positions 706–717 (LLPTPEQTPLPQ) are enriched in low complexity.

This sequence belongs to the semaphorin family. (Microbial infection) Interacts with P.sordellii toxin TcsL; semaphorins SEMA6A and SEMA6B constitute the major host receptors for TcsL in the vascular endothelium. In terms of tissue distribution, expressed in the brain in GABAergic neurons.

It localises to the cell membrane. Functions as a cell surface repellent for mossy fibers of developing neurons in the hippocampus where it plays a role in axon guidance. May function through the PLXNA4 receptor expressed by mossy cell axons. Functionally, (Microbial infection) Acts as a receptor for P.sordellii toxin TcsL in the in the vascular endothelium. In Homo sapiens (Human), this protein is Semaphorin-6B (SEMA6B).